A 119-amino-acid polypeptide reads, in one-letter code: Large ribosomal subunit protein uL14 (119 aa).

Belongs to the universal ribosomal protein uL14 family. As to quaternary structure, part of the 50S ribosomal subunit. Forms a cluster with proteins L3 and L19. In the 70S ribosome, L14 and L19 interact and together make contacts with the 16S rRNA in bridges B5 and B8.

Binds to 23S rRNA. Forms part of two intersubunit bridges in the 70S ribosome. The protein is Large ribosomal subunit protein uL14 of Wolbachia sp. subsp. Brugia malayi (strain TRS).